Reading from the N-terminus, the 50-residue chain is uncharacterized protein (50 aa).

This is an uncharacterized protein from Saccharomyces cerevisiae (strain ATCC 204508 / S288c) (Baker's yeast).